The primary structure comprises 160 residues: MVNEFVKKLREDIWQLAEPVIASEGLELVEVECLRMKTRWLVRIYMDREGGVTLDDCSEISNQLGDVLDVHDLPPDPYTLEVSSPGLDRPLVRDKDFVRYQGCEVSIRLEQKVDGIRNFRGRLLEYVEEDGRKILVIEMASKLYRIPRDLIVKANLVYRF.

It belongs to the RimP family.

It is found in the cytoplasm. In terms of biological role, required for maturation of 30S ribosomal subunits. This chain is Ribosome maturation factor RimP, found in Syntrophus aciditrophicus (strain SB).